The primary structure comprises 257 residues: Transmembrane protein C257L (257 aa).

The next 2 helical transmembrane spans lie at 123–143 (LELL…FTAL) and 163–183 (MMIF…YVLV).

This sequence belongs to the asfivirus C257R family.

The protein resides in the host membrane. It localises to the virion. This chain is Transmembrane protein C257L, found in African swine fever virus (isolate Warthog/Namibia/Wart80/1980) (ASFV).